A 68-amino-acid chain; its full sequence is Metallothionein-3 (68 aa).

At Met1 the chain carries N-acetylmethionine. The beta stretch occupies residues 1 to 30 (MDPETCPCPSGGSCTCADSCKCEGCKCTSC). A divalent metal cation contacts are provided by Cys6, Cys8, Cys14, Cys16, Cys20, Cys22, Cys25, Cys27, and Cys30. The tract at residues 31–68 (KKSCCSCCPAECEKCAKDCVCKGGEGAEAEAEKCSCCE) is alpha. Ser33 bears the Phosphoserine mark. A divalent metal cation contacts are provided by Cys34, Cys35, Cys37, Cys38, Cys42, Cys45, Cys49, Cys51, Cys64, Cys66, and Cys67.

Belongs to the metallothionein superfamily. Type 1 family.

Functionally, binds heavy metals. Contains five zinc and one copper atoms per polypeptide chain and only a negligible amount of cadmium. In Macaca fascicularis (Crab-eating macaque), this protein is Metallothionein-3 (MT3).